We begin with the raw amino-acid sequence, 82 residues long: Small ribosomal subunit protein uS17 (82 aa).

This sequence belongs to the universal ribosomal protein uS17 family. As to quaternary structure, part of the 30S ribosomal subunit.

One of the primary rRNA binding proteins, it binds specifically to the 5'-end of 16S ribosomal RNA. The protein is Small ribosomal subunit protein uS17 of Azorhizobium caulinodans (strain ATCC 43989 / DSM 5975 / JCM 20966 / LMG 6465 / NBRC 14845 / NCIMB 13405 / ORS 571).